The chain runs to 119 residues: Flagellar transcriptional regulator FlhD (119 aa).

This sequence belongs to the FlhD family. As to quaternary structure, homodimer; disulfide-linked. Forms a heterohexamer composed of two FlhC and four FlhD subunits. Each FlhC binds a FlhD dimer, forming a heterotrimer, and a hexamer assembles by dimerization of two heterotrimers.

Its subcellular location is the cytoplasm. In terms of biological role, functions in complex with FlhC as a master transcriptional regulator that regulates transcription of several flagellar and non-flagellar operons by binding to their promoter region. Activates expression of class 2 flagellar genes, including fliA, which is a flagellum-specific sigma factor that turns on the class 3 genes. Also regulates genes whose products function in a variety of physiological pathways. This Serratia marcescens protein is Flagellar transcriptional regulator FlhD.